The chain runs to 93 residues: Small ribosomal subunit protein uS19 (93 aa).

Belongs to the universal ribosomal protein uS19 family.

Its function is as follows. Protein S19 forms a complex with S13 that binds strongly to the 16S ribosomal RNA. In Oleidesulfovibrio alaskensis (strain ATCC BAA-1058 / DSM 17464 / G20) (Desulfovibrio alaskensis), this protein is Small ribosomal subunit protein uS19.